The following is an 859-amino-acid chain: Rod cGMP-specific 3',5'-cyclic phosphodiesterase subunit alpha (859 aa).

At Gly-2 the chain carries N-acetylglycine. GAF domains lie at 73–222 (QAEK…NLIM) and 254–431 (DIER…GWSV). One can recognise a PDEase domain in the interval 483-816 (EEEELAEILQ…KEWKALADEY (334 aa)). Catalysis depends on His-559, which acts as the Proton donor. Positions 563, 599, 600, and 720 each coordinate a divalent metal cation. The disordered stretch occupies residues 821-859 (KGLEEEKQKQQAANQAAAGSQHGGKQPGGGPASKSCCVQ). The segment covering 830-840 (QQAANQAAAGS) has biased composition (low complexity). A compositionally biased stretch (gly residues) spans 841-851 (QHGGKQPGGGP). Position 856 is a cysteine methyl ester (Cys-856). A lipid anchor (S-farnesyl cysteine) is attached at Cys-856. A propeptide spans 857 to 859 (CVQ) (removed in mature form).

It belongs to the cyclic nucleotide phosphodiesterase family. As to quaternary structure, oligomer composed of two catalytic chains (alpha and beta), an inhibitory chain (gamma) and the delta chain. A divalent metal cation serves as cofactor.

The protein resides in the cell membrane. It is found in the cell projection. The protein localises to the cilium. It localises to the photoreceptor outer segment. It carries out the reaction 3',5'-cyclic GMP + H2O = GMP + H(+). Its function is as follows. Rod-specific cGMP phosphodiesterase that catalyzes the hydrolysis of 3',5'-cyclic GMP. This protein participates in processes of transmission and amplification of the visual signal. The protein is Rod cGMP-specific 3',5'-cyclic phosphodiesterase subunit alpha of Bos taurus (Bovine).